The following is a 300-amino-acid chain: UDP-N-acetylenolpyruvoylglucosamine reductase (300 aa).

An FAD-binding PCMH-type domain is found at 30 to 194 (RVGGPADFFV…IGATFVLDSD (165 aa)). Arg174 is an active-site residue. Residue Ser223 is the Proton donor of the active site. Residue Glu293 is part of the active site.

It belongs to the MurB family. Requires FAD as cofactor.

It is found in the cytoplasm. The enzyme catalyses UDP-N-acetyl-alpha-D-muramate + NADP(+) = UDP-N-acetyl-3-O-(1-carboxyvinyl)-alpha-D-glucosamine + NADPH + H(+). Its pathway is cell wall biogenesis; peptidoglycan biosynthesis. In terms of biological role, cell wall formation. The polypeptide is UDP-N-acetylenolpyruvoylglucosamine reductase (Geobacter sulfurreducens (strain ATCC 51573 / DSM 12127 / PCA)).